We begin with the raw amino-acid sequence, 133 residues long: Phosphoribosyl-AMP cyclohydrolase (133 aa).

Aspartate 90 contacts Mg(2+). Cysteine 91 lines the Zn(2+) pocket. Mg(2+)-binding residues include aspartate 92 and aspartate 94. Residues cysteine 107 and cysteine 114 each coordinate Zn(2+).

Belongs to the PRA-CH family. Homodimer. It depends on Mg(2+) as a cofactor. Zn(2+) is required as a cofactor.

Its subcellular location is the cytoplasm. The catalysed reaction is 1-(5-phospho-beta-D-ribosyl)-5'-AMP + H2O = 1-(5-phospho-beta-D-ribosyl)-5-[(5-phospho-beta-D-ribosylamino)methylideneamino]imidazole-4-carboxamide. It participates in amino-acid biosynthesis; L-histidine biosynthesis; L-histidine from 5-phospho-alpha-D-ribose 1-diphosphate: step 3/9. Its function is as follows. Catalyzes the hydrolysis of the adenine ring of phosphoribosyl-AMP. The sequence is that of Phosphoribosyl-AMP cyclohydrolase from Streptomyces avermitilis (strain ATCC 31267 / DSM 46492 / JCM 5070 / NBRC 14893 / NCIMB 12804 / NRRL 8165 / MA-4680).